A 369-amino-acid chain; its full sequence is Glutamate 5-kinase (369 aa).

An ATP-binding site is contributed by lysine 9. Residues serine 49, aspartate 136, and asparagine 148 each contribute to the substrate site. ATP-binding positions include 168-169 and 210-216; these read TD and TGGMLTK. The PUA domain maps to 275 to 355; sequence QGSIWVDKGA…KGVLIYRDDW (81 aa).

Belongs to the glutamate 5-kinase family.

It localises to the cytoplasm. It catalyses the reaction L-glutamate + ATP = L-glutamyl 5-phosphate + ADP. It participates in amino-acid biosynthesis; L-proline biosynthesis; L-glutamate 5-semialdehyde from L-glutamate: step 1/2. In terms of biological role, catalyzes the transfer of a phosphate group to glutamate to form L-glutamate 5-phosphate. The protein is Glutamate 5-kinase of Streptococcus pneumoniae (strain 70585).